The sequence spans 1046 residues: Hemoglobin-haptoglobin-binding protein A (1046 aa).

The first 24 residues, 1–24 (MTNFRLNLLAYSVMLGLTAGVAYA), serve as a signal peptide directing secretion. A run of 4 repeats spans residues 26–29 (QPTN), 30–33 (QPTN), 34–37 (QPTN), and 38–41 (QPTN). A 4 X 4 AA tandem repeats of Q-P-T-N region spans residues 26 to 41 (QPTNQPTNQPTNQPTN). The TonB box signature appears at 51-58 (EQINVLGS). Positions 61–188 (HNDNTPPKIA…LGGSVSFDTK (128 aa)) constitute a TBDR plug domain. The TBDR beta-barrel domain occupies 196-1046 (NKNYYASYKR…NYRMSVQFEF (851 aa)). Positions 1029-1046 (NRFYAPGRNYRMSVQFEF) match the TonB C-terminal box motif.

Belongs to the TonB-dependent receptor family. Hemoglobin/haptoglobin binding protein subfamily.

It is found in the cell outer membrane. Acts as a receptor for the hemoglobin/haptoglobin complex of the human host and is required for heme uptake. Does not bind hemoglobin alone. This Haemophilus influenzae protein is Hemoglobin-haptoglobin-binding protein A (hhuA).